The primary structure comprises 945 residues: MPDHEVQTRKSRMLDDAQEELNITVAVRCRGRNEREIKAKSSVVVTVPDVTGSNEVSINTTDEVGIAAKMNSRTYTVDKVFGPSADQSLIFKEIAEPLFDDFMKGYNCTVLVYGMTSTGKTYTMTGDEKLYDGQLSDSAGIIPRIMFKLFDALEATDSDFLVKCSYIELYNEELKDLLDESHDSSKRLRIFDSSSMNHSSRASSQSNSPREPEVAHNGFSRRRQRPPPVKANRMSATKQQLSESGSGIYVQNVQEFHIINAREGINVLQKGLKHRQVASTKMNDFSSRSHTIFTIMLYKNCDGELFRVSKMNLVDLAGSENISRSGAQNQRAKEAGSINQSLLTLGRVINSLADKSIHIPFRESKLTRLLQDSLGGNTKTALIATISPAKINADETSSTLEYAAKAKNIKNRPQLGALMMKDILVKNISSELAKIKSDFLSTKSKDGIYMSHEHYQEIVNDLENCQTEIQESKRQIESLTSQNNLLLKDKKASQEVTELQNSKIKKLQSTIEYLYDKIERQHHNETELATTIHKLKEALHTMQGSLKSYETHELRLQNDIKEVLYQGITSYRESMNQHLEKVKVSMLDKNLSIKENINNITTIFDDTLKSVEANGSDMCDTLVKLIKETPSMYLKEFNETVSSLKSELSSYSNALTNKLTEISEENNHLREYLDQHLFKNSTQEVLDLRMESVYQKVKNDSDQLLSKLVSMVGAHVEESRTLMVNSMKDTVNEIIDNERSLFQPIRDRWIASCDNINQCDASHQNFEAKSTSGLDKLKELSDASLKSSEDAVNKAKHRTDSFHDFVQKLCCDQSLKKQMHDISDKHRMLEDHFDDNVKYFKESSKGFEDMDCSIKKIIHEMSPEVGDIKSVETLMERINARTFSPVRPTGKTPSRQVLKNAITSKASSRSMSPIKTLDTNVRIISPVKRGTIEFGAEGPPTKKVR.

The region spanning asparagine 22–isoleucine 409 is the Kinesin motor domain. Residue glycine 114–threonine 121 participates in ATP binding. The interval isoleucine 190–glutamate 243 is disordered. The segment covering serine 193–serine 208 has biased composition (low complexity). Positions methionine 234–glutamate 243 are enriched in polar residues. 2 coiled-coil regions span residues methionine 450 to glutamate 562 and leucine 634 to glutamine 675.

This sequence belongs to the TRAFAC class myosin-kinesin ATPase superfamily. Kinesin family. BimC subfamily.

The protein resides in the cytoplasm. It is found in the cytoskeleton. It localises to the spindle. Its function is as follows. Elongates the mitotic spindle by interacting with spindle microtubules to generate an outward force pushing spindle poles apart. Following spindle assembly, CIN8 and KIP1 apparently act to oppose a force, possibly generated by KAR3, that draws separated poles back together. The protein is Kinesin-like protein CIN8 (CIN8) of Eremothecium gossypii (strain ATCC 10895 / CBS 109.51 / FGSC 9923 / NRRL Y-1056) (Yeast).